Consider the following 539-residue polypeptide: uncharacterized protein (539 aa).

5 consecutive transmembrane segments (helical) span residues 4-22 (LVENQLLALVVIMTVGLLL), 27-46 (IFGFRLGVAAVLFVGLALST), 56-78 (LIYVVGLSLFVYTIGLEAGPGFF), 90-112 (ALTLGAIIATTALAWALITVLNI), and 155-177 (PVVAYSLAYPLGVLIVILSIAIF). 2 consecutive RCK C-terminal domains span residues 187 to 269 (KEAE…AIGE) and 271 to 352 (IDGD…LLGD). A run of 4 helical transmembrane segments spans residues 360-382 (FNLLPLAAGLMIGVLVGMVEFPL), 422-444 (LALRQLGITLFLAAIGTSAGAGF), 453-475 (SLTIIGFGALLTLFISITVLFVG), and 516-538 (YTSVYPLAMIAKILAAQTLLFLL).

The protein belongs to the AAE transporter (TC 2.A.81) family.

It localises to the cell membrane. This is an uncharacterized protein from Corynebacterium glutamicum (strain ATCC 13032 / DSM 20300 / JCM 1318 / BCRC 11384 / CCUG 27702 / LMG 3730 / NBRC 12168 / NCIMB 10025 / NRRL B-2784 / 534).